We begin with the raw amino-acid sequence, 158 residues long: Vasotocin-neurophysin VT 2 (158 aa).

Residues 1–19 form the signal peptide; sequence MPHSTLLLCVIGLLAFSSA. An intrachain disulfide couples cysteine 20 to cysteine 25. Glycine 28 bears the Glycine amide mark. 7 cysteine pairs are disulfide-bonded: cysteine 41–cysteine 85, cysteine 44–cysteine 58, cysteine 52–cysteine 75, cysteine 59–cysteine 65, cysteine 92–cysteine 105, cysteine 99–cysteine 117, and cysteine 106–cysteine 111.

The protein belongs to the vasopressin/oxytocin family. In terms of processing, seven disulfide bonds are present in neurophysin.

It localises to the secreted. In terms of biological role, vasotocin is an antidiuretic hormone. This chain is Vasotocin-neurophysin VT 2, found in Oncorhynchus keta (Chum salmon).